Consider the following 273-residue polypeptide: Glutamate racemase (273 aa).

Residues 11 to 12 (DS) and 43 to 44 (YG) each bind substrate. Cys74 functions as the Proton donor/acceptor in the catalytic mechanism. Substrate is bound at residue 75-76 (NT). The active-site Proton donor/acceptor is Cys185. 186-187 (TH) contributes to the substrate binding site.

It belongs to the aspartate/glutamate racemases family.

The catalysed reaction is L-glutamate = D-glutamate. It functions in the pathway cell wall biogenesis; peptidoglycan biosynthesis. Provides the (R)-glutamate required for cell wall biosynthesis. The polypeptide is Glutamate racemase (Lactiplantibacillus plantarum (strain ATCC BAA-793 / NCIMB 8826 / WCFS1) (Lactobacillus plantarum)).